The chain runs to 647 residues: Sodium/nucleoside cotransporter 1 (647 aa).

Topologically, residues 1–79 are cytoplasmic; sequence MEDNTPRQRD…VRRFCREHTQ (79 aa). Residues 34–58 are disordered; that stretch reads EGRAPGSDSSPAEVGGGWSKAGPEH. A helical transmembrane segment spans residues 80–103; that stretch reads LFRWICTGLLCTAFAAFLLIACLL. Residues 104–108 lie on the Extracellular side of the membrane; the sequence is DFQRA. A helical transmembrane segment spans residues 109–127; sequence LALFVLFCVVLFFLAHSLL. Topologically, residues 128–146 are cytoplasmic; the sequence is KRLLGPKLLRCVKPLRHPC. A helical transmembrane segment spans residues 147–166; sequence LNLWFKRGLALAAFLGLVLW. At 167–177 the chain is on the extracellular side; that stretch reads LVLDTAQRPEQ. Residues 178 to 194 traverse the membrane as a helical segment; that stretch reads LVSFGGICVFILLLFAG. Residues 195-200 lie on the Cytoplasmic side of the membrane; it reads SKHHRA. A helical membrane pass occupies residues 201–221; sequence VSWRAVSWGLGLQFALGLFVI. Residues 222–260 lie on the Extracellular side of the membrane; sequence RTEPGFIAFQWLGDQIQIFLSYTEAGSSFVFGEALVKDV. A helical membrane pass occupies residues 261–282; that stretch reads FAFQVLPIIVFFSCAMSVLYYV. At 283 to 293 the chain is on the cytoplasmic side; that stretch reads GLMQWVILKIS. A helical membrane pass occupies residues 294-317; the sequence is WLMQATMGTTATETLSVAGNIFVS. Residues 318-336 are Extracellular-facing; the sequence is QTEAPLLIRPYLADMTLSE. A helical transmembrane segment spans residues 337–359; it reads IHVVMTGGYATIAGSLLGAYISF. Residues 360-365 are Cytoplasmic-facing; the sequence is GIDAAS. Residues 366–385 traverse the membrane as a helical segment; that stretch reads LIAASVMAAPCALALSKLVY. Residues 386–422 lie on the Extracellular side of the membrane; the sequence is PEVEESKFKREEGVKLTYGDAQNLLEAASSGAAMSVR. The chain crosses the membrane as a helical span at residues 423–445; the sequence is VVTNIAANLIAFLAVLAFINAAL. Residues 446–456 lie on the Cytoplasmic side of the membrane; the sequence is SWLGDMVDVQG. The helical transmembrane segment at 457–478 threads the bilayer; that stretch reads LSFQLICSYVLRPVAFLMGVAW. Residues 479 to 533 lie on the Extracellular side of the membrane; it reads EDCPVVAELLGMKLFLNEFVAYQELSGYKQRRLAGAEEWVGSRKQWISVRAEILT. A helical transmembrane segment spans residues 534 to 557; that stretch reads TYALCGFANFSSIGIMLGGLTSMV. Over 558–568 the chain is Cytoplasmic; the sequence is PQRKGDFSQIV. Residues 569–591 form a helical membrane-spanning segment; that stretch reads LRALCTGACVSLVNACVAGILYV. The Extracellular portion of the chain corresponds to 592 to 647; sequence PRGAEVDCVSFLNTTLSSSSFEVYQCCRQFFQSTSLEFSPEALDNCCRFYNHTICV. Residues Asn-604 and Asn-642 are each glycosylated (N-linked (GlcNAc...) asparagine).

This sequence belongs to the concentrative nucleoside transporter (CNT) (TC 2.A.41) family. In terms of processing, N-glycosylated. N-glycosylation is required for localization to the plasma membrane and the transporter activity.

The protein localises to the cell membrane. Its subcellular location is the apical cell membrane. The enzyme catalyses uridine(out) + Na(+)(out) = uridine(in) + Na(+)(in). It catalyses the reaction thymidine(out) + Na(+)(out) = thymidine(in) + Na(+)(in). The catalysed reaction is cytidine(out) + Na(+)(out) = cytidine(in) + Na(+)(in). It carries out the reaction adenosine(out) + Na(+)(out) = adenosine(in) + Na(+)(in). Its activity is regulated as follows. Due to its high apparent affinity but slow transport, adenosine could act as a negative regulator of pyrimidine transport under some conditions. Functionally, sodium and pyrimidine nucleoside symporter of the plasma membrane that imports uridine, thymidine and cytidine into cells by coupling their transport to the transmembrane sodium electrochemical gradient. Also transports adenosine, an atypical substrate transported with high apparent affinity, but low maximum velocity. Therefore, exhibits the transport characteristics of the nucleoside transport system cit or N2 subtype (N2/cit). Involved in renal nucleoside (re)absorption. This is Sodium/nucleoside cotransporter 1 (SLC28A1) from Sus scrofa (Pig).